We begin with the raw amino-acid sequence, 439 residues long: High-energy light unresponsive protein 1 (439 aa).

Topologically, residues 1-67 (MPPPSSHSNI…LGLNQSIRPN (67 aa)) are cytoplasmic. The helical transmembrane segment at 68–88 (NSLLFRIYSWLVFCLLLFTTL) threads the bilayer. The Extracellular segment spans residues 89–114 (RKFNQVGVRPNGTRENLQEFFANPRS). The chain crosses the membrane as a helical span at residues 115–135 (MITLCNALIMLSGLLASLQLY). Residues 136–164 (TLGAKRLKPLKILCQFSLNVRTKQAERRQ) lie on the Cytoplasmic side of the membrane. The helical transmembrane segment at 165–185 (FMINTFLAVFSGLLALTMAAT) threads the bilayer. Residues 186-211 (YAMSKWGYILYIVGTPNLDTETIFCV) are Extracellular-facing. Residues 212–232 (LLDSYALFVSRAAISALAILF) traverse the membrane as a helical segment. Residues 233 to 290 (YQHCSVIRRSIKHLINEMVPAEQDECPLPESSLQKIHDCQISYQRIFNGKAVIEEYYS) lie on the Cytoplasmic side of the membrane. The helical transmembrane segment at 291-311 (FVLFYSYGVCIPIFCFLMFVG) threads the bilayer. Residues 312–324 (MSAQSICWSEVVS) are Extracellular-facing. A helical transmembrane segment spans residues 325 to 345 (IVIWIVNAILVLLLFSLPAFM). Topologically, residues 346 to 402 (INEDGDRLVASSFRMYHETFHEERDLTVLSQMTFFTFQIHSTKLTLSACNYFYMDRS) are cytoplasmic. A helical membrane pass occupies residues 403-423 (ILLSLFSAILTYFLILWEFDI). The Extracellular portion of the chain corresponds to 424–439 (KNNQSLQNIANHTIHT).

It belongs to the insect chemoreceptor superfamily. Gustatory receptor (GR) family. Expressed in the AVG and PVT neurons of the tail.

Its subcellular location is the cell membrane. Its function is as follows. Photoreceptor for short wavelength (UV) light that mediates UV-light-induced avoidance behavior. Directly senses and absorbs both UV-A and UV-B light with very high efficiency. Absorption of UV-B but not UV-A light shows resistance to photobleaching. In contrast to other photoreceptors, does not use a prosthetic chromophore to capture photons and only depends on its protein conformation. Might have a role in response to white light exposure. This is High-energy light unresponsive protein 1 from Caenorhabditis elegans.